Consider the following 199-residue polypeptide: Holliday junction branch migration complex subunit RuvA (199 aa).

The interval 1–64 (MIALLTGKLA…EDAINLYGFR (64 aa)) is domain I. Residues 65 to 143 (TMEEKEMFQL…KLGHGPLQQD (79 aa)) form a domain II region. Residues 144–148 (VAPAD) form a flexible linker region. Residues 149 to 199 (AHNDMRDDVVSALVNLGYKEAVVQKTVDEIGVAADATVESLLKQALKKLMK) are domain III.

This sequence belongs to the RuvA family. Homotetramer. Forms an RuvA(8)-RuvB(12)-Holliday junction (HJ) complex. HJ DNA is sandwiched between 2 RuvA tetramers; dsDNA enters through RuvA and exits via RuvB. An RuvB hexamer assembles on each DNA strand where it exits the tetramer. Each RuvB hexamer is contacted by two RuvA subunits (via domain III) on 2 adjacent RuvB subunits; this complex drives branch migration. In the full resolvosome a probable DNA-RuvA(4)-RuvB(12)-RuvC(2) complex forms which resolves the HJ.

It is found in the cytoplasm. The RuvA-RuvB-RuvC complex processes Holliday junction (HJ) DNA during genetic recombination and DNA repair, while the RuvA-RuvB complex plays an important role in the rescue of blocked DNA replication forks via replication fork reversal (RFR). RuvA specifically binds to HJ cruciform DNA, conferring on it an open structure. The RuvB hexamer acts as an ATP-dependent pump, pulling dsDNA into and through the RuvAB complex. HJ branch migration allows RuvC to scan DNA until it finds its consensus sequence, where it cleaves and resolves the cruciform DNA. This is Holliday junction branch migration complex subunit RuvA from Geotalea daltonii (strain DSM 22248 / JCM 15807 / FRC-32) (Geobacter daltonii).